The primary structure comprises 670 residues: DNA ligase (670 aa).

NAD(+) contacts are provided by residues 32–36 (DAYYD), 81–82 (SL), and E110. The active-site N6-AMP-lysine intermediate is the K112. The NAD(+) site is built by R133, E170, K289, and K313. Residues C407, C410, C425, and C431 each contribute to the Zn(2+) site. The BRCT domain occupies 590-670 (EDELRLKGQT…ELLVFLGLAG (81 aa)).

It belongs to the NAD-dependent DNA ligase family. LigA subfamily. Requires Mg(2+) as cofactor. It depends on Mn(2+) as a cofactor.

It carries out the reaction NAD(+) + (deoxyribonucleotide)n-3'-hydroxyl + 5'-phospho-(deoxyribonucleotide)m = (deoxyribonucleotide)n+m + AMP + beta-nicotinamide D-nucleotide.. Its function is as follows. DNA ligase that catalyzes the formation of phosphodiester linkages between 5'-phosphoryl and 3'-hydroxyl groups in double-stranded DNA using NAD as a coenzyme and as the energy source for the reaction. It is essential for DNA replication and repair of damaged DNA. The chain is DNA ligase from Shewanella denitrificans (strain OS217 / ATCC BAA-1090 / DSM 15013).